The primary structure comprises 161 residues: Tropomyosin (161 aa).

Residues 1–161 (MDKLREKINA…DEVHQALEDL (161 aa)) adopt a coiled-coil conformation. A compositionally biased stretch (basic and acidic residues) spans 40-52 (EQEYESLSRKSEA). Disordered stretches follow at residues 40-65 (EQEYESLSRKSEAAESQLEELEEETK) and 107-134 (EKMRQTDVKAEHFERRVQSLERERDDME).

Homodimer.

It is found in the cytoplasm. Its subcellular location is the cytoskeleton. Its function is as follows. Forms part of the F-actin contractile ring during cytokinesis. The polypeptide is Tropomyosin (cdc8) (Schizosaccharomyces pombe (strain 972 / ATCC 24843) (Fission yeast)).